The primary structure comprises 481 residues: ATP synthase subunit beta (481 aa).

160–167 is a binding site for ATP; that stretch reads GGAGVGKT.

Belongs to the ATPase alpha/beta chains family. F-type ATPases have 2 components, CF(1) - the catalytic core - and CF(0) - the membrane proton channel. CF(1) has five subunits: alpha(3), beta(3), gamma(1), delta(1), epsilon(1). CF(0) has three main subunits: a(1), b(2) and c(9-12). The alpha and beta chains form an alternating ring which encloses part of the gamma chain. CF(1) is attached to CF(0) by a central stalk formed by the gamma and epsilon chains, while a peripheral stalk is formed by the delta and b chains.

Its subcellular location is the cell inner membrane. The enzyme catalyses ATP + H2O + 4 H(+)(in) = ADP + phosphate + 5 H(+)(out). Its function is as follows. Produces ATP from ADP in the presence of a proton gradient across the membrane. The catalytic sites are hosted primarily by the beta subunits. The polypeptide is ATP synthase subunit beta (Stigmatella aurantiaca).